The sequence spans 243 residues: TIGR03089 family protein (243 aa).

The protein belongs to the TIGR03089 family.

The protein is TIGR03089 family protein of Mycobacterium tuberculosis (strain ATCC 25618 / H37Rv).